A 501-amino-acid chain; its full sequence is Glycerol kinase (501 aa).

Thr-12 contributes to the ADP binding site. Residues Thr-12, Thr-13, and Ser-14 each coordinate ATP. Sn-glycerol 3-phosphate is bound at residue Thr-12. Arg-16 serves as a coordination point for ADP. Sn-glycerol 3-phosphate contacts are provided by Arg-82, Glu-83, Tyr-134, and Asp-244. Residues Arg-82, Glu-83, Tyr-134, Asp-244, and Gln-245 each contribute to the glycerol site. Thr-266 and Gly-310 together coordinate ADP. The ATP site is built by Thr-266, Gly-310, Gln-314, and Gly-411. The ADP site is built by Gly-411 and Asn-415.

This sequence belongs to the FGGY kinase family.

The enzyme catalyses glycerol + ATP = sn-glycerol 3-phosphate + ADP + H(+). It functions in the pathway polyol metabolism; glycerol degradation via glycerol kinase pathway; sn-glycerol 3-phosphate from glycerol: step 1/1. With respect to regulation, inhibited by fructose 1,6-bisphosphate (FBP). Key enzyme in the regulation of glycerol uptake and metabolism. Catalyzes the phosphorylation of glycerol to yield sn-glycerol 3-phosphate. The sequence is that of Glycerol kinase from Methylobacterium radiotolerans (strain ATCC 27329 / DSM 1819 / JCM 2831 / NBRC 15690 / NCIMB 10815 / 0-1).